The chain runs to 57 residues: Granulin-3 (57 aa).

2 cysteine pairs are disulfide-bonded: C4–C16 and C10–C26.

This sequence belongs to the granulin family. In terms of processing, granulins are disulfide bridged. In terms of tissue distribution, ubiquitous.

The protein localises to the secreted. Its function is as follows. Granulins have possible cytokine-like activity. They may play a role in inflammation, wound repair, and tissue remodeling. The chain is Granulin-3 from Cyprinus carpio (Common carp).